Consider the following 391-residue polypeptide: Dual-specificity RNA methyltransferase RlmN (391 aa).

Positions 1–20 are disordered; the sequence is MTSVVADSLTETKTDSQKPI. Residues 10–20 are compositionally biased toward basic and acidic residues; sequence TETKTDSQKPI. The Proton acceptor role is filled by Glu-120. The 241-residue stretch at 126–366 folds into the Radical SAM core domain; that stretch reads DADRGTLCIS…APVRRTRGQD (241 aa). Cysteines 133 and 371 form a disulfide. Residues Cys-140, Cys-144, and Cys-147 each coordinate [4Fe-4S] cluster. S-adenosyl-L-methionine-binding positions include 195–196, Ser-227, 249–251, and Asn-328; these read GE and SLH. Cys-371 acts as the S-methylcysteine intermediate in catalysis.

The protein belongs to the radical SAM superfamily. RlmN family. The cofactor is [4Fe-4S] cluster.

It is found in the cytoplasm. The catalysed reaction is adenosine(2503) in 23S rRNA + 2 reduced [2Fe-2S]-[ferredoxin] + 2 S-adenosyl-L-methionine = 2-methyladenosine(2503) in 23S rRNA + 5'-deoxyadenosine + L-methionine + 2 oxidized [2Fe-2S]-[ferredoxin] + S-adenosyl-L-homocysteine. It catalyses the reaction adenosine(37) in tRNA + 2 reduced [2Fe-2S]-[ferredoxin] + 2 S-adenosyl-L-methionine = 2-methyladenosine(37) in tRNA + 5'-deoxyadenosine + L-methionine + 2 oxidized [2Fe-2S]-[ferredoxin] + S-adenosyl-L-homocysteine. Specifically methylates position 2 of adenine 2503 in 23S rRNA and position 2 of adenine 37 in tRNAs. m2A2503 modification seems to play a crucial role in the proofreading step occurring at the peptidyl transferase center and thus would serve to optimize ribosomal fidelity. The protein is Dual-specificity RNA methyltransferase RlmN of Zymomonas mobilis subsp. mobilis (strain ATCC 31821 / ZM4 / CP4).